Reading from the N-terminus, the 45-residue chain is Large ribosomal subunit protein bL36 (45 aa).

Residues 1-45 are disordered; it reads MKVSSSIKADPSKGDKLVRRKGRLYVINKKDPNRKQRQAGPARKK.

This sequence belongs to the bacterial ribosomal protein bL36 family.

In Chlamydia caviae (strain ATCC VR-813 / DSM 19441 / 03DC25 / GPIC) (Chlamydophila caviae), this protein is Large ribosomal subunit protein bL36.